The chain runs to 268 residues: Shikimate kinase (268 aa).

ATP is bound at residue 70 to 80; the sequence is PSGYGLKSSSA.

The protein belongs to the GHMP kinase family. Archaeal shikimate kinase subfamily.

The protein resides in the cytoplasm. It catalyses the reaction shikimate + ATP = 3-phosphoshikimate + ADP + H(+). Its pathway is metabolic intermediate biosynthesis; chorismate biosynthesis; chorismate from D-erythrose 4-phosphate and phosphoenolpyruvate: step 5/7. The chain is Shikimate kinase (aroK) from Thermoplasma acidophilum (strain ATCC 25905 / DSM 1728 / JCM 9062 / NBRC 15155 / AMRC-C165).